Reading from the N-terminus, the 101-residue chain is Protein S100-A4 (101 aa).

At Ala-2 the chain carries N-acetylalanine. 2 EF-hand domains span residues 12 to 47 and 50 to 85; these read IVST…SFLG and TDEA…IAMM. 2 residues coordinate Ca(2+): Lys-28 and Glu-33. At Lys-35 the chain carries N6-acetyllysine. The Ca(2+) site is built by Asp-63, Asn-65, Asp-67, Glu-69, and Glu-74.

It belongs to the S-100 family. In terms of assembly, homodimer. Interacts with PPFIBP1 in a calcium-dependent mode. Interacts with PGLYRP1; this complex acts as a chemoattractant that promotes lymphocyte movement. Interacts with MYH9; this interaction increases cell motility. Interacts with Annexin 2/ANXA2. Interacts with TP53; this interaction promotes TP53 degradation. Interacts with CCR5 and CXCR3. Interacts with FCGR3A; this interaction inhibits PKC-dependent phosphorylation of FCGR3A.

The protein localises to the secreted. It localises to the nucleus. Its subcellular location is the cytoplasm. Its function is as follows. Calcium-binding protein that plays a role in various cellular processes including motility, angiogenesis, cell differentiation, apoptosis, and autophagy. Increases cell motility and invasiveness by interacting with non-muscle myosin heavy chain (NMMHC) IIA/MYH9. Mechanistically, promotes filament depolymerization and increases the amount of soluble myosin-IIA, resulting in the formation of stable protrusions facilitating chemotaxis. Also modulates the pro-apoptotic function of TP53 by binding to its C-terminal transactivation domain within the nucleus and reducing its protein levels. Within the extracellular space, stimulates cytokine production including granulocyte colony-stimulating factor and CCL24 from T-lymphocytes. In addition, stimulates T-lymphocyte chemotaxis by acting as a chemoattractant complex with PGLYRP1 that promotes lymphocyte migration via CCR5 and CXCR3 receptors. This is Protein S100-A4 (S100a4) from Rattus norvegicus (Rat).